The primary structure comprises 211 residues: tRNA (guanosine(18)-2'-O)-methyltransferase (211 aa).

3 residues coordinate S-adenosyl-L-methionine: Thr-103, Ile-146, and Leu-155.

This sequence belongs to the class IV-like SAM-binding methyltransferase superfamily. RNA methyltransferase TrmH family. As to quaternary structure, homodimer.

It catalyses the reaction guanosine(18) in tRNA + S-adenosyl-L-methionine = 2'-O-methylguanosine(18) in tRNA + S-adenosyl-L-homocysteine + H(+). Catalyzes the 2'-O methylation of guanosine at position 18 in tRNA. Type II methylase, which methylates only a subset of tRNA species. The sequence is that of tRNA (guanosine(18)-2'-O)-methyltransferase from Aquifex aeolicus (strain VF5).